Here is a 346-residue protein sequence, read N- to C-terminus: Phosphate acyltransferase (346 aa).

This sequence belongs to the PlsX family. In terms of assembly, homodimer. Probably interacts with PlsY.

Its subcellular location is the cytoplasm. It catalyses the reaction a fatty acyl-[ACP] + phosphate = an acyl phosphate + holo-[ACP]. The protein operates within lipid metabolism; phospholipid metabolism. Catalyzes the reversible formation of acyl-phosphate (acyl-PO(4)) from acyl-[acyl-carrier-protein] (acyl-ACP). This enzyme utilizes acyl-ACP as fatty acyl donor, but not acyl-CoA. This is Phosphate acyltransferase from Brucella ovis (strain ATCC 25840 / 63/290 / NCTC 10512).